The following is a 292-amino-acid chain: Sulfofructosephosphate aldolase (292 aa).

The Schiff-base intermediate with substrate role is filled by K193.

It belongs to the aldolase LacD family. Homotetramer.

The catalysed reaction is 6-deoxy-6-sulfo-D-fructose 1-phosphate = (2S)-3-sulfolactaldehyde + dihydroxyacetone phosphate. Its function is as follows. Cleaves 6-deoxy-6-sulfo-D-fructose 1-phosphate (SFP) to form dihydroxyacetone phosphate (DHAP) and 3-sulfolactaldehyde (SLA). Can also catalyze the reverse reaction. In Salmonella typhimurium (strain LT2 / SGSC1412 / ATCC 700720), this protein is Sulfofructosephosphate aldolase (yihT).